We begin with the raw amino-acid sequence, 450 residues long: Ammonium transporter Rh type A (450 aa).

The Cytoplasmic portion of the chain corresponds to 1–4; it reads MRFK. A helical transmembrane segment spans residues 5 to 25; it reads FSLIALSLEVVMIVSFALFVE. The Extracellular portion of the chain corresponds to 26-72; it reads YETSQNGSQKSASQQNASQQNAAAQQNASQQGNASSPAKEDQFFQLY. N-linked (GlcNAc...) asparagine glycosylation is found at Asn-31, Asn-41, Asn-52, and Asn-58. Positions 34 to 61 are disordered; the sequence is QKSASQQNASQQNAAAQQNASQQGNASS. The helical transmembrane segment at 73 to 93 threads the bilayer; it reads PLFQHVHVMIFVGFGFLMTFL. The Cytoplasmic segment spans residues 94–97; sequence KKYG. The helical transmembrane segment at 98 to 118 threads the bilayer; sequence FSGVGFNLFLAALGLQWGTIV. Over 119-134 the chain is Extracellular; sequence QGLLHSHGLKFPFRIK. The chain crosses the membrane as a helical span at residues 135 to 155; it reads NMINADFSTATVLISFGAVLG. Over 156-159 the chain is Cytoplasmic; that stretch reads KTSP. Residues 160–180 form a helical membrane-spanning segment; sequence IQMIIMTILEIAVFAGNEHLV. Residues 181-189 lie on the Extracellular side of the membrane; the sequence is TEIFKASDT. Residues 190 to 210 traverse the membrane as a helical segment; the sequence is GASMTIHAFGAYFGLAVAGVL. The Cytoplasmic portion of the chain corresponds to 211-229; the sequence is YRSGLKHGHPNEESVYHSD. Residues 230–250 traverse the membrane as a helical segment; sequence LFAMIGTLFLWMFWPSFNSAI. Over 251–260 the chain is Extracellular; it reads AQPENNQYRA. The helical transmembrane segment at 261–281 threads the bilayer; it reads IVNTYMSLAACVITAYALSSL. Residues 282–289 are Cytoplasmic-facing; that stretch reads VERRGRLD. A helical membrane pass occupies residues 290-307; it reads MVHIQNATLAGGVAVGTC. Residues 308–311 are Extracellular-facing; sequence ADME. Residues 312 to 332 form a helical membrane-spanning segment; that stretch reads IPLYFAMTIGSIAGIISVLGY. Residues 333–349 are Cytoplasmic-facing; that stretch reads KFLSPLLAHKLMIHDTC. Residues 350-370 traverse the membrane as a helical segment; the sequence is GVHNLHGLPGVFGGLASIVAI. The Extracellular segment spans residues 371–384; that stretch reads SWGKSTVSTMAMQA. The helical transmembrane segment at 385–405 threads the bilayer; sequence TALGSSIGSAIVGGLVTGLIL. At 406 to 450 the chain is on the cytoplasmic side; sequence KLPVWNQPPDEYCFDDSVSWKVPKYRELDNYFFQHVTHNHVEHEV.

The protein belongs to the ammonium transporter (TC 2.A.49) family. Rh subfamily. As to quaternary structure, homodimer. Heterotrimer; a RHCE monomer interacts with a RHAG homodimer. Component of the ankyrin-1 complex in the erythrocyte, composed of ANK1, RHCE, RHAG, SLC4A1, EPB42, GYPA, GYPB and AQP1. Interacts with GYPB (via the N-terminal); this interaction bridges the (RHAG)2(RHCE) heterotrimer with the SLC4A1 Band 3 I dimer complexed with GYPA. In terms of processing, glycosylated.

Its subcellular location is the membrane. It carries out the reaction methylamine(out) = methylamine(in). The catalysed reaction is NH4(+)(in) = NH4(+)(out). The enzyme catalyses CO2(out) = CO2(in). Its function is as follows. Component of the ankyrin-1 complex, a multiprotein complex involved in the stability and shape of the erythrocyte membrane. Heterotrimer with RHCE (RHAG)2(RHCE), that transports ammonium and its related derivative methylammonium, in both neutral and ionic forms, across the erythrocyte membrane. The transport of NH4(+) is electrogenic and masks the NH3 transport. Also, may act as a CO2 channel. Moreover in erythrocyte, regulates RHD membrane expression and is associated with rhesus blood group antigen expression. The protein is Ammonium transporter Rh type A of Rattus norvegicus (Rat).